The chain runs to 65 residues: uncharacterized protein (65 aa).

This is an uncharacterized protein from Homo sapiens (Human).